The sequence spans 1049 residues: RIMS-binding protein 2 (1049 aa).

The SH3 1 domain occupies Gly164–Asp231. 3 Fibronectin type-III domains span residues Val294–Val387, Ala390–Glu471, and Pro486–Ala587. Disordered regions lie at residues Pro580–Thr664, Ser694–Arg714, and Leu728–Leu750. The span at Leu582–Pro598 shows a compositional bias: pro residues. Residues Met603–Glu616 show a composition bias toward basic and acidic residues. Residues Gly641–Arg651 show a composition bias toward low complexity. Phosphoserine occurs at positions 701 and 709. Basic and acidic residues predominate over residues Cys735 to Arg746. 2 positions are modified to phosphoserine: Ser832 and Ser839. Thr841 is subject to Phosphothreonine. SH3 domains are found at residues Leu848–Ala916 and Val952–Asp1019. Residues His1024–Pro1049 are disordered. Over residues Thr1040–Pro1049 the composition is skewed to basic residues.

It belongs to the RIMBP family. Interacts with CACNA1D and CACNA1B, and potentially with other Ca(2+) channel alpha-1 isoforms. Interacts with RIMS1 and RIMS2.

The protein resides in the cell membrane. Its subcellular location is the synapse. In terms of biological role, plays a role in the synaptic transmission as bifunctional linker that interacts simultaneously with RIMS1, RIMS2, CACNA1D and CACNA1B. The protein is RIMS-binding protein 2 (Rimbp2) of Rattus norvegicus (Rat).